We begin with the raw amino-acid sequence, 171 residues long: Co-chaperone protein HscB (171 aa).

Positions 2 to 74 (DYFTLFGLPA…LTRAEYLLSL (73 aa)) constitute a J domain.

The protein belongs to the HscB family. In terms of assembly, interacts with HscA and stimulates its ATPase activity. Interacts with IscU.

In terms of biological role, co-chaperone involved in the maturation of iron-sulfur cluster-containing proteins. Seems to help targeting proteins to be folded toward HscA. In Citrobacter koseri (strain ATCC BAA-895 / CDC 4225-83 / SGSC4696), this protein is Co-chaperone protein HscB.